Consider the following 542-residue polypeptide: uncharacterized protein (542 aa).

The span at 125–138 shows a compositional bias: low complexity; that stretch reads ANSNSSSTGRDSTP. 4 disordered regions span residues 125–182, 194–333, 390–428, and 459–487; these read ANSN…NHHN, LPPT…CSSS, SSST…YSSI, and SSSS…PSCN. Residues 202–213 show a composition bias toward polar residues; that stretch reads QKPSFLSNSNQI. Composition is skewed to low complexity over residues 228 to 306, 314 to 333, 390 to 423, and 459 to 479; these read SYTS…NSNN, NKLS…CSSS, SSST…TSTN, and SSSS…GGNS.

This is an uncharacterized protein from Dictyostelium discoideum (Social amoeba).